The sequence spans 316 residues: Ribosomal RNA small subunit methyltransferase H (316 aa).

S-adenosyl-L-methionine is bound by residues 35 to 37 (SGH), D55, F84, D105, and Q112.

It belongs to the methyltransferase superfamily. RsmH family.

The protein resides in the cytoplasm. It catalyses the reaction cytidine(1402) in 16S rRNA + S-adenosyl-L-methionine = N(4)-methylcytidine(1402) in 16S rRNA + S-adenosyl-L-homocysteine + H(+). Specifically methylates the N4 position of cytidine in position 1402 (C1402) of 16S rRNA. In Streptococcus pyogenes serotype M18 (strain MGAS8232), this protein is Ribosomal RNA small subunit methyltransferase H.